A 49-amino-acid chain; its full sequence is Heme exporter protein C (49 aa).

Belongs to the CcmC/CycZ/HelC family.

Its subcellular location is the cell inner membrane. Functionally, required for the export of heme to the periplasm for the biogenesis of c-type cytochromes. The sequence is that of Heme exporter protein C from Rhizobium leguminosarum bv. viciae.